Here is a 134-residue protein sequence, read N- to C-terminus: ATP synthase epsilon chain (134 aa).

The span at alanine 94–histidine 104 shows a compositional bias: basic and acidic residues. The interval alanine 94–asparagine 115 is disordered.

This sequence belongs to the ATPase epsilon chain family. In terms of assembly, F-type ATPases have 2 components, CF(1) - the catalytic core - and CF(0) - the membrane proton channel. CF(1) has five subunits: alpha(3), beta(3), gamma(1), delta(1), epsilon(1). CF(0) has three main subunits: a, b and c.

The protein resides in the cell membrane. Its function is as follows. Produces ATP from ADP in the presence of a proton gradient across the membrane. This chain is ATP synthase epsilon chain, found in Staphylococcus epidermidis (strain ATCC 12228 / FDA PCI 1200).